The chain runs to 206 residues: Large ribosomal subunit protein uL4 (206 aa).

Residues 48-75 are disordered; it reads TQSAKTRAEVSGGGIKPWRQKGTGRARQ.

This sequence belongs to the universal ribosomal protein uL4 family. As to quaternary structure, part of the 50S ribosomal subunit.

In terms of biological role, one of the primary rRNA binding proteins, this protein initially binds near the 5'-end of the 23S rRNA. It is important during the early stages of 50S assembly. It makes multiple contacts with different domains of the 23S rRNA in the assembled 50S subunit and ribosome. Its function is as follows. Forms part of the polypeptide exit tunnel. In Clostridium botulinum (strain Loch Maree / Type A3), this protein is Large ribosomal subunit protein uL4.